A 118-amino-acid chain; its full sequence is Putative pterin-4-alpha-carbinolamine dehydratase (118 aa).

Belongs to the pterin-4-alpha-carbinolamine dehydratase family.

It catalyses the reaction (4aS,6R)-4a-hydroxy-L-erythro-5,6,7,8-tetrahydrobiopterin = (6R)-L-erythro-6,7-dihydrobiopterin + H2O. The chain is Putative pterin-4-alpha-carbinolamine dehydratase from Pseudomonas entomophila (strain L48).